A 209-amino-acid polypeptide reads, in one-letter code: Small ribosomal subunit protein uS4 (209 aa).

The span at 1–13 (MSTKSRTRSKTRL) shows a compositional bias: basic residues. Disordered regions lie at residues 1–20 (MSTK…LGIP) and 28–49 (YLEK…QDSD). Residues 95–176 (QRLDALVVRS…PKLPSYLEVE (82 aa)) enclose the S4 RNA-binding domain.

It belongs to the universal ribosomal protein uS4 family. As to quaternary structure, part of the 30S ribosomal subunit. Contacts protein S5. The interaction surface between S4 and S5 is involved in control of translational fidelity.

In terms of biological role, one of the primary rRNA binding proteins, it binds directly to 16S rRNA where it nucleates assembly of the body of the 30S subunit. With S5 and S12 plays an important role in translational accuracy. This chain is Small ribosomal subunit protein uS4, found in Clavibacter michiganensis subsp. michiganensis (strain NCPPB 382).